The primary structure comprises 254 residues: Mannose-binding protein (254 aa).

The first 19 residues, 1–19, serve as a signal peptide directing secretion; the sequence is MTLLQPFSALLLCLSLMMA. The interval 46–99 is disordered; it reads NGLPGRDGRDGPKGEKGDPGEGLRGLQGLPGKAGPQGLKGEVGPQGEKGQKGER. Positions 51 to 66 are enriched in basic and acidic residues; sequence RDGRDGPKGEKGDPGE. Residue Pro57 is modified to 4-hydroxyproline. 2 positions are modified to 5-hydroxylysine: Lys58 and Lys61. Lys58 and Lys61 each carry an O-linked (Gal...) hydroxylysine glycan. Pro75 carries the post-translational modification 4-hydroxyproline. 5-hydroxylysine occurs at positions 93 and 96. Positions 140–250 constitute a C-type lectin domain; sequence VGKKMFVSTG…LDCSNSNIFI (111 aa). 2 disulfide bridges follow: Cys161/Cys252 and Cys229/Cys243.

As to quaternary structure, oligomeric complex of 3 or more homotrimers.

It localises to the secreted. In terms of biological role, calcium-dependent lectin involved in innate immune defense. Binds mannose, fucose and N-acetylglucosamine on different microorganisms and activates the lectin complement pathway. In Gallus gallus (Chicken), this protein is Mannose-binding protein.